We begin with the raw amino-acid sequence, 323 residues long: Prostaglandin F synthase 2 (323 aa).

NADP(+) is bound by residues 20 to 24 (GFGTY) and D50. Catalysis depends on Y55, which acts as the Proton donor. H117 is a binding site for substrate. Residues 166–167 (SN), Q190, 216–221 (YAALGA), and 270–280 (KSFNKKRIKEN) contribute to the NADP(+) site.

Belongs to the aldo/keto reductase family. As to quaternary structure, monomer.

It localises to the cytoplasm. It carries out the reaction prostaglandin F2alpha + NADP(+) = prostaglandin D2 + NADPH + H(+). It participates in lipid metabolism; prostaglandin biosynthesis. Catalyzes the reduction of PGD(2) and PGH(2) to PGF(2 alpha) and a stereoisomer, respectively. It has a broad substrate specificity and also reduces other carbonyl compounds. The polypeptide is Prostaglandin F synthase 2 (Bos taurus (Bovine)).